The chain runs to 176 residues: NAD(P)H-quinone oxidoreductase subunit 6, chloroplastic (176 aa).

The next 5 helical transmembrane spans lie at 10–30 (FLLV…VLLT), 32–52 (PIFS…FYIL), 61–81 (AQLL…VMFM), 95–115 (VGNG…ITII), and 152–172 (FFLP…GAIA).

It belongs to the complex I subunit 6 family. In terms of assembly, NDH is composed of at least 16 different subunits, 5 of which are encoded in the nucleus.

Its subcellular location is the plastid. It localises to the chloroplast thylakoid membrane. The enzyme catalyses a plastoquinone + NADH + (n+1) H(+)(in) = a plastoquinol + NAD(+) + n H(+)(out). It carries out the reaction a plastoquinone + NADPH + (n+1) H(+)(in) = a plastoquinol + NADP(+) + n H(+)(out). NDH shuttles electrons from NAD(P)H:plastoquinone, via FMN and iron-sulfur (Fe-S) centers, to quinones in the photosynthetic chain and possibly in a chloroplast respiratory chain. The immediate electron acceptor for the enzyme in this species is believed to be plastoquinone. Couples the redox reaction to proton translocation, and thus conserves the redox energy in a proton gradient. This is NAD(P)H-quinone oxidoreductase subunit 6, chloroplastic (ndhG) from Populus alba (White poplar).